A 122-amino-acid chain; its full sequence is Large ribosomal subunit protein bL12 (122 aa).

It belongs to the bacterial ribosomal protein bL12 family. Homodimer. Part of the ribosomal stalk of the 50S ribosomal subunit. Forms a multimeric L10(L12)X complex, where L10 forms an elongated spine to which 2 to 4 L12 dimers bind in a sequential fashion. Binds GTP-bound translation factors.

Forms part of the ribosomal stalk which helps the ribosome interact with GTP-bound translation factors. Is thus essential for accurate translation. This chain is Large ribosomal subunit protein bL12, found in Mesoplasma florum (strain ATCC 33453 / NBRC 100688 / NCTC 11704 / L1) (Acholeplasma florum).